The sequence spans 110 residues: DNA-directed RNA polymerase subunit omega (110 aa).

This sequence belongs to the RNA polymerase subunit omega family. The RNAP catalytic core consists of 2 alpha, 1 beta, 1 beta' and 1 omega subunit. When a sigma factor is associated with the core the holoenzyme is formed, which can initiate transcription.

It carries out the reaction RNA(n) + a ribonucleoside 5'-triphosphate = RNA(n+1) + diphosphate. Promotes RNA polymerase assembly. Latches the N- and C-terminal regions of the beta' subunit thereby facilitating its interaction with the beta and alpha subunits. This Vesicomyosocius okutanii subsp. Calyptogena okutanii (strain HA) protein is DNA-directed RNA polymerase subunit omega.